Reading from the N-terminus, the 274-residue chain is Nitrogenase iron protein (274 aa).

ATP is bound at residue 8–15 (GKGGIGKS). Residue cysteine 94 coordinates [4Fe-4S] cluster. Residue arginine 97 is modified to ADP-ribosylarginine; by dinitrogenase reductase ADP-ribosyltransferase. A [4Fe-4S] cluster-binding site is contributed by cysteine 131.

The protein belongs to the NifH/BchL/ChlL family. In terms of assembly, homodimer. It depends on [4Fe-4S] cluster as a cofactor. The reversible ADP-ribosylation of Arg-97 inactivates the nitrogenase reductase and regulates nitrogenase activity.

The enzyme catalyses N2 + 8 reduced [2Fe-2S]-[ferredoxin] + 16 ATP + 16 H2O = H2 + 8 oxidized [2Fe-2S]-[ferredoxin] + 2 NH4(+) + 16 ADP + 16 phosphate + 6 H(+). Its function is as follows. The key enzymatic reactions in nitrogen fixation are catalyzed by the nitrogenase complex, which has 2 components: the iron protein and the molybdenum-iron protein. The polypeptide is Nitrogenase iron protein (Dehalococcoides mccartyi (strain ATCC BAA-2266 / KCTC 15142 / 195) (Dehalococcoides ethenogenes (strain 195))).